A 272-amino-acid chain; its full sequence is Shikimate dehydrogenase (NADP(+)) (272 aa).

Shikimate contacts are provided by residues 14–16 (SKS) and threonine 61. The active-site Proton acceptor is the lysine 65. NADP(+) is bound at residue glutamate 77. Positions 86 and 102 each coordinate shikimate. Residues 126 to 130 (GAGGA), 149 to 154 (NRTVSR), and methionine 213 contribute to the NADP(+) site. Tyrosine 215 lines the shikimate pocket. Glycine 237 serves as a coordination point for NADP(+).

Belongs to the shikimate dehydrogenase family. Homodimer.

The catalysed reaction is shikimate + NADP(+) = 3-dehydroshikimate + NADPH + H(+). It functions in the pathway metabolic intermediate biosynthesis; chorismate biosynthesis; chorismate from D-erythrose 4-phosphate and phosphoenolpyruvate: step 4/7. Involved in the biosynthesis of the chorismate, which leads to the biosynthesis of aromatic amino acids. Catalyzes the reversible NADPH linked reduction of 3-dehydroshikimate (DHSA) to yield shikimate (SA). The protein is Shikimate dehydrogenase (NADP(+)) of Escherichia coli O139:H28 (strain E24377A / ETEC).